A 166-amino-acid chain; its full sequence is Regulatory protein RecX (166 aa).

The protein belongs to the RecX family.

Its subcellular location is the cytoplasm. In terms of biological role, modulates RecA activity. The chain is Regulatory protein RecX from Shigella dysenteriae serotype 1 (strain Sd197).